The following is a 345-amino-acid chain: Trans-3-hydroxy-L-proline dehydratase (345 aa).

Ser90 acts as the Proton acceptor in catalysis. Substrate is bound by residues 91–92, Asp252, and 257–258; these read GS and GT.

This sequence belongs to the proline racemase family.

The catalysed reaction is trans-3-hydroxy-L-proline = 1-pyrroline-2-carboxylate + H2O. Catalyzes the dehydration of trans-3-hydroxy-L-proline (t3LHyp) to Delta(1)-pyrroline-2-carboxylate (Pyr2C). May be involved in a degradation pathway that converts t3LHyp to L-proline, which would allow S.novella to grow on t3LHyp as a sole carbon source. The chain is Trans-3-hydroxy-L-proline dehydratase from Ancylobacter novellus (strain ATCC 8093 / DSM 506 / JCM 20403 / CCM 1077 / IAM 12100 / NBRC 12443 / NCIMB 10456) (Starkeya novella).